Here is a 1453-residue protein sequence, read N- to C-terminus: Leucine-rich repeat-containing protein 9 (1453 aa).

7 LRR repeats span residues 53–78 (FPNL…CLQL), 97–119 (CRNL…LEKL), 120–141 (IKLK…LQTL), 142–164 (KNLK…LDSN), 166–188 (QLER…NLTR), 224–248 (LQRF…AMKK), and 264–287 (KEDL…RVKL). The segment at 302-321 (LKGSGKGHSDGSNNSKVTDP) is disordered. 23 LRR repeats span residues 344-367 (LNAL…IYHI), 671-693 (KARP…TSVY), 694-715 (SHIV…LSKL), 716-737 (TGLR…VYHL), 739-758 (NLEY…GFRG), 759-784 (LMKL…MLCK), 786-812 (TTSL…VIGR), 886-908 (YLKI…LEKL), 909-930 (ENLK…LESC), 931-952 (INLE…ISKM), 953-975 (TKLT…TFDN), 976-1001 (MLHL…SFTL), 1023-1048 (LCNL…LFVI), 1092-1115 (FKQM…PVDQ), 1116-1138 (FRNV…LIYL), 1139-1161 (PNVK…LKPQ), 1201-1224 (MHSL…QLNR), 1225-1247 (LRNL…LDNL), 1248-1270 (VVLQ…AFAK), 1272-1292 (SSLL…KLQS), 1293-1317 (LVKL…KLDV), 1319-1345 (STLR…IFRL), and 1365-1388 (EFHL…PMDG).

In Homo sapiens (Human), this protein is Leucine-rich repeat-containing protein 9 (LRRC9).